Here is a 334-residue protein sequence, read N- to C-terminus: Methylthioribose-1-phosphate isomerase (334 aa).

Substrate is bound by residues 44–46 (RGA), arginine 87, and glutamine 192. Aspartate 233 (proton donor) is an active-site residue. Substrate is bound at residue 243-244 (NK).

This sequence belongs to the eIF-2B alpha/beta/delta subunits family. MtnA subfamily.

It catalyses the reaction 5-(methylsulfanyl)-alpha-D-ribose 1-phosphate = 5-(methylsulfanyl)-D-ribulose 1-phosphate. The protein operates within amino-acid biosynthesis; L-methionine biosynthesis via salvage pathway; L-methionine from S-methyl-5-thio-alpha-D-ribose 1-phosphate: step 1/6. In terms of biological role, catalyzes the interconversion of methylthioribose-1-phosphate (MTR-1-P) into methylthioribulose-1-phosphate (MTRu-1-P). This chain is Methylthioribose-1-phosphate isomerase, found in Dehalococcoides mccartyi (strain ATCC BAA-2266 / KCTC 15142 / 195) (Dehalococcoides ethenogenes (strain 195)).